A 503-amino-acid polypeptide reads, in one-letter code: Ent-kaurene oxidase-like 5 (503 aa).

The chain crosses the membrane as a helical span at residues 8–28; sequence GAGGIGVAAAAAVVAATLAVV. C448 contacts heme.

This sequence belongs to the cytochrome P450 family. Requires heme as cofactor. In terms of tissue distribution, expressed in roots.

The protein resides in the membrane. Functionally, may hydroxylate diterpenes. The protein is Ent-kaurene oxidase-like 5 of Oryza sativa subsp. japonica (Rice).